The chain runs to 494 residues: MKKQAFSSEQYLNLQRDHILERINQFDGKLYLEFGGKMLEDFHAARVLPGYEPDNKIKLLQEFKDQVEVVIAINASNIEHSKARGDLGISYDQEVLRLIDKFNELNIYVGSVVITQYSGQPAADAFRNQLEKNGITSYIHYPIKGYPTDINHIISPEGMGKNDYIKTSRNLIVVTAPGPGSGKLATCLSNMYHDQINGIKSGYAKFETFPVWNLPLHHPVNLAYEAATADLDDVNMIDPFHLETYGKTTVNYNRDIEIFPVLKRMLERILGESPYASPTDMGVNMVGFAITDDEAAKEASKQEIIRRYYQTVLDFKNERVPETAVKKIELLMNDLGITPEDRQVVVAARAKAEETGGSALALELPNGQIVTGKNSELFGPTAAALINAIKTSAGIDKDTKLIEPEVVKPIQSLKIDHLGSRNPRLHSNEILIALAITAANNADAARAMKELSNLKGSEAHSTIILTDEDKNVLRKLGINVTFDPYYQYDKLYRK.

This sequence belongs to the UPF0371 family.

This Streptococcus thermophilus (strain CNRZ 1066) protein is UPF0371 protein str1377.